Reading from the N-terminus, the 327-residue chain is L-lactate dehydrogenase (327 aa).

NAD(+)-binding positions include V18, D39, K44, Y69, and G83 to A84. Substrate is bound by residues Q86, R92, and N124–D127. NAD(+) is bound by residues A122–N124 and S147. D152–R155 provides a ligand contact to substrate. Beta-D-fructose 1,6-bisphosphate contacts are provided by R157 and H172. Catalysis depends on H179, which acts as the Proton acceptor. Y224 is modified (phosphotyrosine). A substrate-binding site is contributed by T233.

It belongs to the LDH/MDH superfamily. LDH family. Homotetramer.

It is found in the cytoplasm. The catalysed reaction is (S)-lactate + NAD(+) = pyruvate + NADH + H(+). The protein operates within fermentation; pyruvate fermentation to lactate; (S)-lactate from pyruvate: step 1/1. Its activity is regulated as follows. Allosterically activated by fructose 1,6-bisphosphate (FBP). Catalyzes the conversion of lactate to pyruvate. The protein is L-lactate dehydrogenase of Streptococcus uberis (strain ATCC BAA-854 / 0140J).